Consider the following 108-residue polypeptide: MTSIIYSPKDIFEQEFKTSMRGFDKKEVDEFLDNVIKDYENFNAQIEALKAENEALKKAKFQARNTVSATVQQPVPQPTRVAQSATNFDILKRISKLEKEVFGKQIIE.

A coiled-coil region spans residues 32 to 69; it reads LDNVIKDYENFNAQIEALKAENEALKKAKFQARNTVSA.

Belongs to the GpsB family. As to quaternary structure, forms polymers through the coiled coil domains. Interacts with PBP1, MreC and EzrA.

Its subcellular location is the cytoplasm. In terms of biological role, divisome component that associates with the complex late in its assembly, after the Z-ring is formed, and is dependent on DivIC and PBP2B for its recruitment to the divisome. Together with EzrA, is a key component of the system that regulates PBP1 localization during cell cycle progression. Its main role could be the removal of PBP1 from the cell pole after pole maturation is completed. Also contributes to the recruitment of PBP1 to the division complex. Not essential for septum formation. In Streptococcus pyogenes serotype M28 (strain MGAS6180), this protein is Cell cycle protein GpsB.